Consider the following 97-residue polypeptide: Conotoxin Cal6.1e (97 aa).

The signal sequence occupies residues 1 to 22; it reads MKLTTVLIVAVLVLAACQFTVT. The interval 23–49 is disordered; sequence DNSGDDTENPSLRSAGENQNPDSTKTI. Positions 23-60 are excised as a propeptide; it reads DNSGDDTENPSLRSAGENQNPDSTKTITARATRARTNM. Positions 31-45 are enriched in polar residues; that stretch reads NPSLRSAGENQNPDS. Intrachain disulfides connect Cys71–Cys87, Cys78–Cys91, and Cys86–Cys96.

This sequence belongs to the conotoxin O1 superfamily. As to expression, expressed by the venom duct.

Its subcellular location is the secreted. In terms of biological role, probable neurotoxin with unknown target. Possibly targets ion channels. The chain is Conotoxin Cal6.1e from Californiconus californicus (California cone).